Reading from the N-terminus, the 520-residue chain is TnpB-like protein L79 (520 aa).

The span at 21-47 (GSKTKKKVFVKKKPPDKKPLKKPVKKT) shows a compositional bias: basic residues. The tract at residues 21–52 (GSKTKKKVFVKKKPPDKKPLKKPVKKTVKTDK) is disordered. Cysteine 474, cysteine 477, cysteine 491, and cysteine 494 together coordinate Zn(2+).

In the central section; belongs to the transposase 2 family. This sequence in the C-terminal section; belongs to the transposase 35 family.

This chain is TnpB-like protein L79, found in Acanthamoeba polyphaga mimivirus (APMV).